Reading from the N-terminus, the 465-residue chain is Respiratory transcription factor ZNF1 (465 aa).

The segment at residues 8-34 (CDCCCIRRVKCDRKKPCKCCLQHNLQC) is a DNA-binding region (zn(2)-C6 fungal-type).

This sequence belongs to the MAL13 family.

The protein localises to the nucleus. In terms of biological role, transcription factor that regulates respiratory growth and plays a critical role in stress adaptation during non-fermentative growth. Binds to promoters of genes involved in non-fermentative metabolism, including processes such as gluconeogenesis (PCK1, FBP1 and MDH2), glyoxylate shunt (MLS1 and ICL1) and the tricarboxylic acid cycle (ACO1). Plays a role in maintaining mitochondrial morphology and function. Also plays a role in tolerance to pH and osmotic stress, especially during the oxidative metabolism. In Saccharomyces cerevisiae (strain ATCC 204508 / S288c) (Baker's yeast), this protein is Respiratory transcription factor ZNF1.